An 86-amino-acid polypeptide reads, in one-letter code: Ferredoxin-like protein YgcO (86 aa).

A 4Fe-4S ferredoxin-type domain is found at G45 to Y74.

It belongs to the bacterial-type ferredoxin family. FixX subfamily.

Its function is as follows. Could be a 3Fe-4S cluster-containing protein. Probably participates in a redox process with YgcN, YgcQ and YgcR. This is Ferredoxin-like protein YgcO (ygcO) from Escherichia coli (strain K12).